A 208-amino-acid chain; its full sequence is Adenylyl-sulfate kinase (208 aa).

31-38 (GLSGSGKS) lines the ATP pocket. Residue Ser-105 is the Phosphoserine intermediate of the active site.

Belongs to the APS kinase family.

The enzyme catalyses adenosine 5'-phosphosulfate + ATP = 3'-phosphoadenylyl sulfate + ADP + H(+). Its pathway is sulfur metabolism; hydrogen sulfide biosynthesis; sulfite from sulfate: step 2/3. Functionally, catalyzes the synthesis of activated sulfate. In Pseudomonas entomophila (strain L48), this protein is Adenylyl-sulfate kinase.